A 573-amino-acid chain; its full sequence is 2-succinyl-5-enolpyruvyl-6-hydroxy-3-cyclohexene-1-carboxylate synthase (573 aa).

Belongs to the TPP enzyme family. MenD subfamily. As to quaternary structure, homodimer. Requires Mg(2+) as cofactor. The cofactor is Mn(2+). Thiamine diphosphate is required as a cofactor.

It catalyses the reaction isochorismate + 2-oxoglutarate + H(+) = 5-enolpyruvoyl-6-hydroxy-2-succinyl-cyclohex-3-ene-1-carboxylate + CO2. The protein operates within quinol/quinone metabolism; 1,4-dihydroxy-2-naphthoate biosynthesis; 1,4-dihydroxy-2-naphthoate from chorismate: step 2/7. Its pathway is quinol/quinone metabolism; menaquinone biosynthesis. In terms of biological role, catalyzes the thiamine diphosphate-dependent decarboxylation of 2-oxoglutarate and the subsequent addition of the resulting succinic semialdehyde-thiamine pyrophosphate anion to isochorismate to yield 2-succinyl-5-enolpyruvyl-6-hydroxy-3-cyclohexene-1-carboxylate (SEPHCHC). The sequence is that of 2-succinyl-5-enolpyruvyl-6-hydroxy-3-cyclohexene-1-carboxylate synthase from Shewanella baltica (strain OS185).